Consider the following 234-residue polypeptide: Phosphoglycolate phosphatase (234 aa).

Asp-9 serves as the catalytic Nucleophile. Residues Asp-9 and Asp-11 each contribute to the Mg(2+) site. Lys-162 provides a ligand contact to substrate. Positions 185 and 189 each coordinate Mg(2+).

Belongs to the archaeal SPP-like hydrolase family. Mg(2+) is required as a cofactor.

It catalyses the reaction 2-phosphoglycolate + H2O = glycolate + phosphate. In terms of biological role, catalyzes the dephosphorylation of 2-phosphoglycolate. In Methanobrevibacter smithii (strain ATCC 35061 / DSM 861 / OCM 144 / PS), this protein is Phosphoglycolate phosphatase.